A 205-amino-acid chain; its full sequence is MRSRRGLLIVLSGPSGVGKGTVRKELFSHEDTRFQYSISVTTRKPREGEVDGVDYFFKEREEFEEMIRNEKLLEWAEFVGNYYGTPIDYVEKTLQEGKDVFLEIEVQGAIQVKKAFPEGVFIFLAPPSLSELKNRIVGRGTETEDVIENRLTVAKEEIDMMDAYDYVVENDQVELACERIKAIVVGEHCRRERVAKYYKEMTEGL.

Residues 6-185 (GLLIVLSGPS…ACERIKAIVV (180 aa)) enclose the Guanylate kinase-like domain. ATP is bound at residue 13–20 (GPSGVGKG).

It belongs to the guanylate kinase family.

The protein resides in the cytoplasm. The catalysed reaction is GMP + ATP = GDP + ADP. Functionally, essential for recycling GMP and indirectly, cGMP. The polypeptide is Guanylate kinase (Bacillus anthracis).